The chain runs to 421 residues: Gamma-glutamyl phosphate reductase (421 aa).

This sequence belongs to the gamma-glutamyl phosphate reductase family.

The protein resides in the cytoplasm. It catalyses the reaction L-glutamate 5-semialdehyde + phosphate + NADP(+) = L-glutamyl 5-phosphate + NADPH + H(+). It participates in amino-acid biosynthesis; L-proline biosynthesis; L-glutamate 5-semialdehyde from L-glutamate: step 2/2. In terms of biological role, catalyzes the NADPH-dependent reduction of L-glutamate 5-phosphate into L-glutamate 5-semialdehyde and phosphate. The product spontaneously undergoes cyclization to form 1-pyrroline-5-carboxylate. This chain is Gamma-glutamyl phosphate reductase, found in Pseudomonas savastanoi pv. phaseolicola (strain 1448A / Race 6) (Pseudomonas syringae pv. phaseolicola (strain 1448A / Race 6)).